Here is a 101-residue protein sequence, read N- to C-terminus: Urease subunit gamma (101 aa).

Belongs to the urease gamma subunit family. In terms of assembly, heterotrimer of UreA (gamma), UreB (beta) and UreC (alpha) subunits. Three heterotrimers associate to form the active enzyme.

The protein resides in the cytoplasm. It carries out the reaction urea + 2 H2O + H(+) = hydrogencarbonate + 2 NH4(+). The protein operates within nitrogen metabolism; urea degradation; CO(2) and NH(3) from urea (urease route): step 1/1. The polypeptide is Urease subunit gamma (Ureaplasma urealyticum (Ureaplasma urealyticum biotype 2)).